A 289-amino-acid polypeptide reads, in one-letter code: Nucleotide-binding protein LAF_0356 (289 aa).

12-19 (GMSGAGKT) serves as a coordination point for ATP. 62 to 65 (DSRS) is a binding site for GTP.

This sequence belongs to the RapZ-like family.

Functionally, displays ATPase and GTPase activities. This chain is Nucleotide-binding protein LAF_0356, found in Limosilactobacillus fermentum (strain NBRC 3956 / LMG 18251) (Lactobacillus fermentum).